Here is a 504-residue protein sequence, read N- to C-terminus: Maturase K (504 aa).

The protein belongs to the intron maturase 2 family. MatK subfamily.

Its subcellular location is the plastid. It localises to the chloroplast. Its function is as follows. Usually encoded in the trnK tRNA gene intron. Probably assists in splicing its own and other chloroplast group II introns. The sequence is that of Maturase K from Actinidia chinensis (Kiwi).